The primary structure comprises 139 residues: FAD synthase (139 aa).

Residues 9–10 (TF), 14–17 (HPGH), and asparagine 92 contribute to the ATP site.

This sequence belongs to the archaeal FAD synthase family. Homodimer. The cofactor is a divalent metal cation.

It carries out the reaction FMN + ATP + H(+) = FAD + diphosphate. The protein operates within cofactor biosynthesis; FAD biosynthesis; FAD from FMN: step 1/1. Its function is as follows. Catalyzes the transfer of the AMP portion of ATP to flavin mononucleotide (FMN) to produce flavin adenine dinucleotide (FAD) coenzyme. The protein is FAD synthase of Methanocella paludicola (strain DSM 17711 / JCM 13418 / NBRC 101707 / SANAE).